The following is a 966-amino-acid chain: Calsyntenin-2 (966 aa).

Positions M1–G20 are cleaved as a signal peptide. Residues G21–S835 lie on the Extracellular side of the membrane. 2 Cadherin domains span residues I46–F162 and K163–F282. 2 N-linked (GlcNAc...) asparagine glycosylation sites follow: N58 and N100. N-linked (GlcNAc...) asparagine glycosylation is found at N344, N376, N720, and N733. A helical transmembrane segment spans residues I836–V856. The Cytoplasmic segment spans residues Y857–K966. Positions N890–K966 are disordered. A compositionally biased stretch (acidic residues) spans G901 to E916. Positions Q943–G960 are enriched in polar residues.

The protein belongs to the calsyntenin family. Proteolytically processed under normal cellular conditions. A primary zeta-cleavage generates a large extracellular (soluble) N-terminal domain (sAlc) and a short C-terminal transmembrane fragment (CTF1). A secondary cleavage catalyzed by gamma-secretase within the transmembrane domain releases the beta-Alc-gamma chain in the extracellular milieu and produces an intracellular fragment (AlcICD). This processing is strongly suppressed in the tripartite complex formed with APBA2 and APP, which seems to prevent the association with PSEN1. Restricted to the brain. In the cerebral cortex, found in the somas and neuropil of all layers. Expressed at highest levels in neurons of cortical layers 5 and 6 and, at lower levels, in neurons of the upper layers. Highly expressed in Purkinje cells. Also found in a few scattered interneurons throughout the granule cell layer and occasionally in neurons in the molecular layer (at protein level). Present throughout all cortical layers, highest levels in GABAergic neurons (based on morphology and distribution pattern).

The protein localises to the postsynaptic cell membrane. Its subcellular location is the endoplasmic reticulum membrane. It localises to the golgi apparatus membrane. It is found in the cell projection. The protein resides in the dendrite. Postsynaptic adhesion molecule that binds to presynaptic neurexins to mediate synapse formation, and which is involved in learning and memory. Promotes synapse development by acting as a cell adhesion molecule at the postsynaptic membrane, which associates with neurexin-alpha at the presynaptic membrane. The chain is Calsyntenin-2 from Mus musculus (Mouse).